We begin with the raw amino-acid sequence, 642 residues long: Zinc finger protein 398 (642 aa).

2 disordered regions span residues 1-24 (MAEA…QPLP) and 198-225 (EGEH…PGIS). Residues 143-214 (VAFDDVSIYF…DQAGPEESEI (72 aa)) form the KRAB domain. Residues 207–220 (AGPEESEIPTDPSE) show a composition bias toward acidic residues. A Glycyl lysine isopeptide (Lys-Gly) (interchain with G-Cter in SUMO2) cross-link involves residue K265. The segment at 343–364 (FSCHHCGKNLSQDMLLTHQCSH) adopts a C2H2-type 1; atypical zinc-finger fold. A C2H2-type 2; degenerate zinc finger spans residues 370–392 (LPCAQCPKHFTPQADLSSTSQDH). 7 consecutive C2H2-type zinc fingers follow at residues 398–420 (PTCP…LRVH), 427–449 (FPCP…RRAH), 455–477 (FRCA…QRGH), 483–505 (FSCP…QMIH), 511–533 (YPCT…RRLH), 539–561 (FSCP…QRIH), and 567–590 (YPCS…RSGH). The segment at 587-615 (RSGHNGGCGGDSDPSGQPPNPPGPLITGL) is disordered.

The protein belongs to the krueppel C2H2-type zinc-finger protein family.

It is found in the nucleus. Functions as a transcriptional activator. The sequence is that of Zinc finger protein 398 (ZNF398) from Homo sapiens (Human).